The primary structure comprises 1035 residues: Beta-galactosidase (1035 aa).

Substrate is bound by residues Asn-109 and Asp-208. Residue Asp-208 participates in Na(+) binding. Mg(2+) contacts are provided by Glu-424, His-426, and Glu-469. Substrate is bound by residues Glu-469 and 545–548; that span reads EYAH. Catalysis depends on Glu-469, which acts as the Proton donor. The active-site Nucleophile is the Glu-545. Asn-605 contacts Mg(2+). Residues Phe-609 and Asn-612 each coordinate Na(+). Substrate-binding residues include Asn-612 and Trp-1011.

It belongs to the glycosyl hydrolase 2 family. As to quaternary structure, homotetramer. It depends on Mg(2+) as a cofactor. Requires Na(+) as cofactor.

The catalysed reaction is Hydrolysis of terminal non-reducing beta-D-galactose residues in beta-D-galactosides.. This is Beta-galactosidase from Klebsiella pneumoniae (strain 342).